Reading from the N-terminus, the 476-residue chain is Aspartyl/glutamyl-tRNA(Asn/Gln) amidotransferase subunit B (476 aa).

Belongs to the GatB/GatE family. GatB subfamily. In terms of assembly, heterotrimer of A, B and C subunits.

It catalyses the reaction L-glutamyl-tRNA(Gln) + L-glutamine + ATP + H2O = L-glutaminyl-tRNA(Gln) + L-glutamate + ADP + phosphate + H(+). It carries out the reaction L-aspartyl-tRNA(Asn) + L-glutamine + ATP + H2O = L-asparaginyl-tRNA(Asn) + L-glutamate + ADP + phosphate + 2 H(+). Functionally, allows the formation of correctly charged Asn-tRNA(Asn) or Gln-tRNA(Gln) through the transamidation of misacylated Asp-tRNA(Asn) or Glu-tRNA(Gln) in organisms which lack either or both of asparaginyl-tRNA or glutaminyl-tRNA synthetases. The reaction takes place in the presence of glutamine and ATP through an activated phospho-Asp-tRNA(Asn) or phospho-Glu-tRNA(Gln). The sequence is that of Aspartyl/glutamyl-tRNA(Asn/Gln) amidotransferase subunit B from Lacticaseibacillus casei (strain BL23) (Lactobacillus casei).